The following is a 438-amino-acid chain: 3-phosphoshikimate 1-carboxyvinyltransferase (438 aa).

Residues Lys-21, Ser-22, and Arg-26 each contribute to the 3-phosphoshikimate site. Residue Lys-21 participates in phosphoenolpyruvate binding. Phosphoenolpyruvate is bound by residues Gly-95 and Arg-123. 4 residues coordinate 3-phosphoshikimate: Ser-167, Gln-169, Asp-315, and Lys-342. Gln-169 serves as a coordination point for phosphoenolpyruvate. Asp-315 functions as the Proton acceptor in the catalytic mechanism. 2 residues coordinate phosphoenolpyruvate: Arg-346 and Arg-387.

This sequence belongs to the EPSP synthase family. Monomer.

It is found in the cytoplasm. The catalysed reaction is 3-phosphoshikimate + phosphoenolpyruvate = 5-O-(1-carboxyvinyl)-3-phosphoshikimate + phosphate. It functions in the pathway metabolic intermediate biosynthesis; chorismate biosynthesis; chorismate from D-erythrose 4-phosphate and phosphoenolpyruvate: step 6/7. Its function is as follows. Catalyzes the transfer of the enolpyruvyl moiety of phosphoenolpyruvate (PEP) to the 5-hydroxyl of shikimate-3-phosphate (S3P) to produce enolpyruvyl shikimate-3-phosphate and inorganic phosphate. In Coxiella burnetii (strain RSA 331 / Henzerling II), this protein is 3-phosphoshikimate 1-carboxyvinyltransferase.